Consider the following 282-residue polypeptide: 4-diphosphocytidyl-2-C-methyl-D-erythritol kinase (282 aa).

Residue Lys15 is part of the active site. 98 to 108 (PMGGGVGGGSS) serves as a coordination point for ATP. Asp140 is a catalytic residue.

It belongs to the GHMP kinase family. IspE subfamily.

It catalyses the reaction 4-CDP-2-C-methyl-D-erythritol + ATP = 4-CDP-2-C-methyl-D-erythritol 2-phosphate + ADP + H(+). The protein operates within isoprenoid biosynthesis; isopentenyl diphosphate biosynthesis via DXP pathway; isopentenyl diphosphate from 1-deoxy-D-xylulose 5-phosphate: step 3/6. Catalyzes the phosphorylation of the position 2 hydroxy group of 4-diphosphocytidyl-2C-methyl-D-erythritol. The sequence is that of 4-diphosphocytidyl-2-C-methyl-D-erythritol kinase from Azoarcus sp. (strain BH72).